The primary structure comprises 523 residues: Chitinase Chi52 (523 aa).

Residues 1–30 form the signal peptide; sequence MNQAVRFRPVITFALAFLLLITWFAPRADA. Residues 80-101 are disordered; the sequence is GSGGETPTPDTAPPSVPAGLTS. Residues 95-180 form the Fibronectin type-III domain; that stretch reads VPAGLTSSSI…TSLSVTTSNG (86 aa). A GH18 domain is found at 190 to 513; that stretch reads KWLIGYWHNF…SAHRPFLNGL (324 aa). The active-site Proton donor is the glutamate 302.

This sequence belongs to the glycosyl hydrolase 18 family. Chitinase class II subfamily.

The catalysed reaction is Random endo-hydrolysis of N-acetyl-beta-D-glucosaminide (1-&gt;4)-beta-linkages in chitin and chitodextrins.. Activity is inhibited by Cu(2+) and Co(2+), and almost completely inhibited by SDS. In terms of biological role, acidic chitinase that displays a broad substrate specificity, showing the highest specific activity toward colloidal chitin, followed by ethylene glycol chitin and ball milled chitin, but exhibits no activity toward powdery chitin and chitosan. Hydrolyzes colloidal chitin and chitooligosaccharides with degree of polymerization 2-5 to release mainly N-acetyl chitobiose. Displays inhibition effects on the growth of some phytopathogenic fungi, including Alternaria alstroemeriae, Botrytis cinerea, Rhizoctonia solani, Sclerotinia sclerotiorum and Valsa mali. This Paenibacillus xylanexedens protein is Chitinase Chi52.